A 623-amino-acid chain; its full sequence is NADPH-dependent diflavin oxidoreductase 1 (623 aa).

The region spanning 7–168 is the Flavodoxin-like domain; that stretch reads IVILYGSETG…VYFEYEKKVL (162 aa). FMN is bound by residues 13–18, 60–63, 106–115, and D142; these read SETGNA, STTG, and LGDSSYPKFN. One can recognise an FAD-binding FR-type domain in the interval 224 to 491; the sequence is ESLKVGRVNI…VGPGVGLAPL (268 aa). Residues R383, 413 to 416, and 445 to 448 contribute to the FAD site; these read RYYS and GICT. An NADP(+)-binding site is contributed by 538-539; sequence SR. Residue W623 participates in FAD binding.

The protein belongs to the NADPH-dependent diflavin oxidoreductase NDOR1 family. In the N-terminal section; belongs to the flavodoxin family. This sequence in the C-terminal section; belongs to the flavoprotein pyridine nucleotide cytochrome reductase family. As to quaternary structure, interacts with DRE2; as part of the cytosolic iron-sulfur (Fe-S) protein assembly (CIA) machinery. FAD serves as cofactor. FMN is required as a cofactor.

The protein localises to the cytoplasm. The protein resides in the mitochondrion. The enzyme catalyses 2 oxidized [2Fe-2S]-[protein] + NADPH = 2 reduced [2Fe-2S]-[protein] + NADP(+) + H(+). Functionally, NADPH-dependent reductase which is a central component of the cytosolic iron-sulfur (Fe-S) protein assembly (CIA) machinery. Transfers electrons from NADPH via its FAD and FMN prosthetic groups to the [2Fe-2S] cluster of DRE2, another key component of the CIA machinery. In turn, this reduced cluster provides electrons for assembly of cytosolic iron-sulfur cluster proteins. Positively controls H(2)O(2)-induced cell death. The polypeptide is NADPH-dependent diflavin oxidoreductase 1 (Saccharomyces cerevisiae (strain ATCC 204508 / S288c) (Baker's yeast)).